Reading from the N-terminus, the 381-residue chain is Protein kinase gsk31 (381 aa).

Residues 25-309 enclose the Protein kinase domain; the sequence is YEPCRVLGSG…AIEVLTHPFF (285 aa). ATP-binding positions include 31-39 and K54; that span reads LGSGSFGVV. The Proton acceptor role is filled by D150. S184 is modified (phosphoserine). Phosphotyrosine is present on Y185.

This sequence belongs to the protein kinase superfamily. CMGC Ser/Thr protein kinase family. GSK-3 subfamily.

The enzyme catalyses L-seryl-[protein] + ATP = O-phospho-L-seryl-[protein] + ADP + H(+). It catalyses the reaction L-threonyl-[protein] + ATP = O-phospho-L-threonyl-[protein] + ADP + H(+). This chain is Protein kinase gsk31 (gsk31), found in Schizosaccharomyces pombe (strain 972 / ATCC 24843) (Fission yeast).